Here is a 388-residue protein sequence, read N- to C-terminus: Alanine racemase 3 (388 aa).

Residue K41 is the Proton acceptor; specific for D-alanine of the active site. K41 is modified (N6-(pyridoxal phosphate)lysine). A substrate-binding site is contributed by R135. Y256 acts as the Proton acceptor; specific for L-alanine in catalysis. Residue M304 coordinates substrate.

The protein belongs to the alanine racemase family. Pyridoxal 5'-phosphate serves as cofactor.

It carries out the reaction L-alanine = D-alanine. It participates in amino-acid biosynthesis; D-alanine biosynthesis; D-alanine from L-alanine: step 1/1. Catalyzes the interconversion of L-alanine and D-alanine. May also act on other amino acids. The chain is Alanine racemase 3 (alr3) from Mesorhizobium japonicum (strain LMG 29417 / CECT 9101 / MAFF 303099) (Mesorhizobium loti (strain MAFF 303099)).